A 91-amino-acid polypeptide reads, in one-letter code: Sec-independent protein translocase protein TatA (91 aa).

Residues methionine 1–glycine 21 traverse the membrane as a helical segment. The interval glycine 42 to valine 91 is disordered.

This sequence belongs to the TatA/E family. The Tat system comprises two distinct complexes: a TatABC complex, containing multiple copies of TatA, TatB and TatC subunits, and a separate TatA complex, containing only TatA subunits. Substrates initially bind to the TatABC complex, which probably triggers association of the separate TatA complex to form the active translocon.

It is found in the cell inner membrane. In terms of biological role, part of the twin-arginine translocation (Tat) system that transports large folded proteins containing a characteristic twin-arginine motif in their signal peptide across membranes. TatA could form the protein-conducting channel of the Tat system. The sequence is that of Sec-independent protein translocase protein TatA from Methylorubrum populi (strain ATCC BAA-705 / NCIMB 13946 / BJ001) (Methylobacterium populi).